Consider the following 147-residue polypeptide: Small ribosomal subunit protein bS16 (147 aa).

The tract at residues 81–147 (QKFTGDTSPS…GDNSGEKAEA (67 aa)) is disordered. 2 stretches are compositionally biased toward basic and acidic residues: residues 95–104 (QPERPNKDDL) and 114–125 (EAPREAITKKSE). Positions 126 to 140 (GAAADEASESAAGDN) are enriched in low complexity.

The protein belongs to the bacterial ribosomal protein bS16 family.

The sequence is that of Small ribosomal subunit protein bS16 from Cutibacterium acnes (strain DSM 16379 / KPA171202) (Propionibacterium acnes).